A 319-amino-acid chain; its full sequence is Lipooligosaccharide heptosyltransferase 2 (319 aa).

Belongs to the glycosyltransferase 9 family.

It carries out the reaction an L-alpha-D-Hep-(1-&gt;5)-[alpha-Kdo-(2-&gt;4)]-alpha-Kdo-(2-&gt;6)-lipid A + ADP-L-glycero-beta-D-manno-heptose = an L-alpha-D-Hep-(1-&gt;3)-L-alpha-D-Hep-(1-&gt;5)-[alpha-Kdo-(2-&gt;4)]-alpha-Kdo-(2-&gt;6)-lipid A + ADP + H(+). It functions in the pathway bacterial outer membrane biogenesis; LOS core biosynthesis. In terms of biological role, glycosyltransferase involved in the biosynthesis of the core oligosaccharide region of lipooligosaccharide (LOS). Catalyzes the addition of the second heptose unit to the heptosyl-Kdo2-lipid A module. The chain is Lipooligosaccharide heptosyltransferase 2 from Campylobacter jejuni subsp. jejuni serotype O:2 (strain ATCC 700819 / NCTC 11168).